Consider the following 94-residue polypeptide: Acylphosphatase (94 aa).

The Acylphosphatase-like domain occupies 7–94 (RLTARITGVV…GEFDDFRIID (88 aa)). Catalysis depends on residues arginine 22 and asparagine 40.

The protein belongs to the acylphosphatase family.

The catalysed reaction is an acyl phosphate + H2O = a carboxylate + phosphate + H(+). This Paenarthrobacter aurescens (strain TC1) protein is Acylphosphatase (acyP).